A 376-amino-acid chain; its full sequence is MTQAVGLVGWRGMVGSVLMQRMRDENDFALIEPVFFSTSNAGGAAPAWAEGAGSLQNAYDIDALKKLPIIVTAQGGDYTSEVYPKLRGAGWQGIWIDAASTLRMADDAIIVLDPVNRPVIDAALKRGVRNFVGGNCTVSCMLMGLAGLFNNDLVEWMSSMTYQAASGGGAQHMRELLTQFGLLNQAVKPLLDDPAAAILDIDRGVLARQQDPSLPQEHFGVPLGGNLIPWIDKDLGDGMSREEWKAEAETNKILGRGAAFGTPATPIDGLCVRIGAMRCHSQALTIKLKRDVPLDEIEDLIAAGTQWAKVVPNTKEDTVKALTPVAVTGTLDIPVGRLRKLSMGLQYLGAFTVGDQLLWGAAEPLRRMLRIALAEA.

NADP(+) contacts are provided by residues 11 to 14, 38 to 39, and glutamine 74; these read RGMV and TS. A phosphate-binding site is contributed by arginine 103. The active-site Acyl-thioester intermediate is cysteine 136. A substrate-binding site is contributed by glutamine 163. Residues 166 to 167 and proline 194 contribute to the NADP(+) site; that span reads SG. Substrate is bound at residue glutamate 242. Residue lysine 245 participates in phosphate binding. Arginine 273 contacts substrate. Catalysis depends on histidine 280, which acts as the Proton acceptor. Glutamine 356 provides a ligand contact to NADP(+).

It belongs to the aspartate-semialdehyde dehydrogenase family. Homodimer.

It carries out the reaction L-aspartate 4-semialdehyde + phosphate + NADP(+) = 4-phospho-L-aspartate + NADPH + H(+). It participates in amino-acid biosynthesis; L-lysine biosynthesis via DAP pathway; (S)-tetrahydrodipicolinate from L-aspartate: step 2/4. The protein operates within amino-acid biosynthesis; L-methionine biosynthesis via de novo pathway; L-homoserine from L-aspartate: step 2/3. It functions in the pathway amino-acid biosynthesis; L-threonine biosynthesis; L-threonine from L-aspartate: step 2/5. Catalyzes the NADPH-dependent formation of L-aspartate-semialdehyde (L-ASA) by the reductive dephosphorylation of L-aspartyl-4-phosphate. The sequence is that of Aspartate-semialdehyde dehydrogenase from Bordetella pertussis (strain Tohama I / ATCC BAA-589 / NCTC 13251).